Reading from the N-terminus, the 213-residue chain is Large ribosomal subunit protein uL3 (213 aa).

Q151 carries the N5-methylglutamine modification.

Belongs to the universal ribosomal protein uL3 family. As to quaternary structure, part of the 50S ribosomal subunit. Forms a cluster with proteins L14 and L19. Methylated by PrmB.

Its function is as follows. One of the primary rRNA binding proteins, it binds directly near the 3'-end of the 23S rRNA, where it nucleates assembly of the 50S subunit. This chain is Large ribosomal subunit protein uL3, found in Rhizobium etli (strain ATCC 51251 / DSM 11541 / JCM 21823 / NBRC 15573 / CFN 42).